We begin with the raw amino-acid sequence, 126 residues long: Small ribosomal subunit protein uS13 (126 aa).

The interval 99 to 126 (LRGQSTKNNARTRKGKKKTVANKKKATK) is disordered. A compositionally biased stretch (basic residues) spans 108–126 (ARTRKGKKKTVANKKKATK).

This sequence belongs to the universal ribosomal protein uS13 family. As to quaternary structure, part of the 30S ribosomal subunit. Forms a loose heterodimer with protein S19. Forms two bridges to the 50S subunit in the 70S ribosome.

In terms of biological role, located at the top of the head of the 30S subunit, it contacts several helices of the 16S rRNA. In the 70S ribosome it contacts the 23S rRNA (bridge B1a) and protein L5 of the 50S subunit (bridge B1b), connecting the 2 subunits; these bridges are implicated in subunit movement. Contacts the tRNAs in the A and P-sites. In Porphyromonas gingivalis (strain ATCC 33277 / DSM 20709 / CIP 103683 / JCM 12257 / NCTC 11834 / 2561), this protein is Small ribosomal subunit protein uS13.